The sequence spans 376 residues: Probable transcription factor At1g61730 (376 aa).

Residues 1 to 150 (MTKKLNPLED…RVKKDEESVK (150 aa)) are disordered. Acidic residues predominate over residues 17 to 40 (SDEDDVETSEAGEASDDSSSSEED). At Ser49 the chain carries Phosphoserine. Positions 49 to 72 (SPSATTAAAPPAKSTAVSTAADSD) are enriched in low complexity. A compositionally biased stretch (acidic residues) spans 73–83 (SGSETETDSDS). A compositionally biased stretch (polar residues) spans 87–103 (NPPNSGSGKTIALNTVN).

Belongs to the GeBP family. In terms of assembly, interacts with DEK3.

The polypeptide is Probable transcription factor At1g61730 (Arabidopsis thaliana (Mouse-ear cress)).